Here is a 591-residue protein sequence, read N- to C-terminus: Uncoordinated protein 58 (591 aa).

The disordered stretch occupies residues Met-1 to His-24. Residues Val-184–Leu-204 form a helical membrane-spanning segment. An N-linked (GlcNAc...) asparagine glycan is attached at Asn-226. The next 5 helical transmembrane spans lie at Thr-289–Val-309, Val-318–Ile-338, Pro-400–Ile-420, Phe-428–Val-448, and Ile-453–Val-473.

Belongs to the two pore domain potassium channel (TC 1.A.1.8) family.

The protein resides in the membrane. Functionally, has a role in mobility, possibly in the transport of potassium in muscles. The sequence is that of Uncoordinated protein 58 from Caenorhabditis elegans.